We begin with the raw amino-acid sequence, 149 residues long: Urease accessory protein UreE (149 aa).

It belongs to the UreE family.

The protein resides in the cytoplasm. Functionally, involved in urease metallocenter assembly. Binds nickel. Probably functions as a nickel donor during metallocenter assembly. The polypeptide is Urease accessory protein UreE (Ureaplasma urealyticum serovar 10 (strain ATCC 33699 / Western)).